The chain runs to 194 residues: MIGRLRGVLTSKTPPWLVVDVCGVGYELEVPMSTFCELPDVGYEVNLFTHYTQKDDSAALYGFLSESERRLFRHLQRVSGIGTKIALAVLSSVSVDTFAGLIQAGDVNALTVIPGIGKKTAERMLVELRDRAADFNNGISTSGKLNLDTVSEAALALQQLGYKPAEAARMARDAGTESDDVATVIKKALQAALC.

The segment at 1–64 is domain I; sequence MIGRLRGVLT…DDSAALYGFL (64 aa). The segment at 65-140 is domain II; the sequence is SESERRLFRH…RAADFNNGIS (76 aa). The tract at residues 140–144 is flexible linker; the sequence is STSGK. Residues 145 to 194 are domain III; sequence LNLDTVSEAALALQQLGYKPAEAARMARDAGTESDDVATVIKKALQAALC.

The protein belongs to the RuvA family. Homotetramer. Forms an RuvA(8)-RuvB(12)-Holliday junction (HJ) complex. HJ DNA is sandwiched between 2 RuvA tetramers; dsDNA enters through RuvA and exits via RuvB. An RuvB hexamer assembles on each DNA strand where it exits the tetramer. Each RuvB hexamer is contacted by two RuvA subunits (via domain III) on 2 adjacent RuvB subunits; this complex drives branch migration. In the full resolvosome a probable DNA-RuvA(4)-RuvB(12)-RuvC(2) complex forms which resolves the HJ.

It is found in the cytoplasm. Its function is as follows. The RuvA-RuvB-RuvC complex processes Holliday junction (HJ) DNA during genetic recombination and DNA repair, while the RuvA-RuvB complex plays an important role in the rescue of blocked DNA replication forks via replication fork reversal (RFR). RuvA specifically binds to HJ cruciform DNA, conferring on it an open structure. The RuvB hexamer acts as an ATP-dependent pump, pulling dsDNA into and through the RuvAB complex. HJ branch migration allows RuvC to scan DNA until it finds its consensus sequence, where it cleaves and resolves the cruciform DNA. The sequence is that of Holliday junction branch migration complex subunit RuvA from Xylella fastidiosa (strain M12).